The primary structure comprises 267 residues: Probable 6-oxopurine nucleoside phosphorylase (267 aa).

Residues Ser10, 50–51 (RH), and 83–84 (SA) contribute to the phosphate site. Met188 lines the substrate pocket. Thr189 lines the phosphate pocket. Residue 212–214 (NYA) participates in substrate binding.

The protein belongs to the PNP/MTAP phosphorylase family. MTAP subfamily. As to quaternary structure, homohexamer. Dimer of a homotrimer.

It catalyses the reaction a purine D-ribonucleoside + phosphate = a purine nucleobase + alpha-D-ribose 1-phosphate. The enzyme catalyses guanosine + phosphate = alpha-D-ribose 1-phosphate + guanine. It carries out the reaction inosine + phosphate = alpha-D-ribose 1-phosphate + hypoxanthine. It functions in the pathway purine metabolism; purine nucleoside salvage. Its function is as follows. Purine nucleoside phosphorylase which is highly specific for 6-oxopurine nucleosides. Cleaves guanosine or inosine to respective bases and sugar-1-phosphate molecules. Involved in purine salvage. The polypeptide is Probable 6-oxopurine nucleoside phosphorylase (Thermococcus kodakarensis (strain ATCC BAA-918 / JCM 12380 / KOD1) (Pyrococcus kodakaraensis (strain KOD1))).